Here is an 836-residue protein sequence, read N- to C-terminus: Protein O-mannosyl-transferase TMTC2 (836 aa).

A helical transmembrane segment spans residues Met-1 to Ala-21. The Extracellular segment spans residues Asp-22–Pro-84. A helical membrane pass occupies residues Trp-85–Phe-105. At Ser-106–Lys-107 the chain is on the cytoplasmic side. Residues Ile-108 to Ile-128 form a helical membrane-spanning segment. Over His-129–Ala-132 the chain is Extracellular. The helical transmembrane segment at Val-133 to Leu-153 threads the bilayer. The Cytoplasmic portion of the chain corresponds to Cys-154–Arg-162. Transmembrane regions (helical) follow at residues Gly-163–Leu-184 and Trp-185–Phe-204. The Cytoplasmic segment spans residues His-205–Lys-220. The helical transmembrane segment at Asn-221 to Ala-241 threads the bilayer. Residues Arg-242 to His-312 are Extracellular-facing. Residues Thr-313–Val-333 form a helical membrane-spanning segment. The Cytoplasmic portion of the chain corresponds to Asp-334–Ser-399. The helical transmembrane segment at Leu-400–Ala-420 threads the bilayer. At Glu-421–Arg-422 the chain is on the extracellular side. The helical transmembrane segment at Val-423–Tyr-443 threads the bilayer. Residues Val-444–Arg-449 are Cytoplasmic-facing. A helical transmembrane segment spans residues Phe-450–Thr-470. Over Ala-471–Thr-836 the chain is Extracellular. TPR repeat units lie at residues Ala-493 to Met-526, Ala-527 to Leu-560, Ala-561 to Asn-594, Thr-606 to Gln-639, Gln-643 to His-676, Ile-677 to Lys-710, Gly-711 to Glu-744, Phe-745 to Tyr-778, and Pro-779 to Asp-812.

This sequence belongs to the TMTC family.

The protein localises to the membrane. It localises to the endoplasmic reticulum. It catalyses the reaction a di-trans,poly-cis-dolichyl beta-D-mannosyl phosphate + L-seryl-[protein] = 3-O-(alpha-D-mannosyl)-L-seryl-[protein] + a di-trans,poly-cis-dolichyl phosphate + H(+). The enzyme catalyses a di-trans,poly-cis-dolichyl beta-D-mannosyl phosphate + L-threonyl-[protein] = 3-O-(alpha-D-mannosyl)-L-threonyl-[protein] + a di-trans,poly-cis-dolichyl phosphate + H(+). It functions in the pathway protein modification; protein glycosylation. Its function is as follows. Transfers mannosyl residues to the hydroxyl group of serine or threonine residues. The 4 members of the TMTC family are O-mannosyl-transferases dedicated primarily to the cadherin superfamily, each member seems to have a distinct role in decorating the cadherin domains with O-linked mannose glycans at specific regions. Also acts as O-mannosyl-transferase on other proteins such as PDIA3. This is Protein O-mannosyl-transferase TMTC2 from Homo sapiens (Human).